The primary structure comprises 77 residues: DNA-directed RNA polymerase subunit Rpo10 (77 aa).

Zn(2+) contacts are provided by C7, C10, C44, and C45.

It belongs to the archaeal Rpo10/eukaryotic RPB10 RNA polymerase subunit family. In terms of assembly, part of the RNA polymerase complex. Requires Zn(2+) as cofactor.

The protein localises to the cytoplasm. It carries out the reaction RNA(n) + a ribonucleoside 5'-triphosphate = RNA(n+1) + diphosphate. DNA-dependent RNA polymerase (RNAP) catalyzes the transcription of DNA into RNA using the four ribonucleoside triphosphates as substrates. The protein is DNA-directed RNA polymerase subunit Rpo10 of Aeropyrum pernix (strain ATCC 700893 / DSM 11879 / JCM 9820 / NBRC 100138 / K1).